Here is a 237-residue protein sequence, read N- to C-terminus: MTINALLLSSSRVGDTPYLAHAIPFIKPLTTNAQKWIFIPYAGVSMSYDTYLASVVTGLSELELDISGIHQHPDPQQAIKDADGILIGGGNTFHLLHQLYRYDLVTLIGEQVALGKPYIGWSAGSNVSGLSIRTTNDMPIIEPPSFNALNLVPFQLNPHYSNYQAPGHNGETRAQRLLEFTKVDPLTPVVGIVEGSALWRQGDKLSLLGDQPAYLFCGEQQEIPIPVGSDLSHLLKA.

Catalysis depends on charge relay system residues Ser-122, Asp-137, and His-159.

The protein belongs to the peptidase S51 family.

Its subcellular location is the cytoplasm. The catalysed reaction is Dipeptidase E catalyzes the hydrolysis of dipeptides Asp-|-Xaa. It does not act on peptides with N-terminal Glu, Asn or Gln, nor does it cleave isoaspartyl peptides.. Functionally, hydrolyzes dipeptides containing N-terminal aspartate residues. May play a role in allowing the cell to use peptide aspartate to spare carbon otherwise required for the synthesis of the aspartate family of amino acids. The polypeptide is Peptidase E (Shewanella baltica (strain OS155 / ATCC BAA-1091)).